A 339-amino-acid chain; its full sequence is Endo-beta-N-acetylglucosaminidase F1 (339 aa).

A signal peptide (or 51, or 52) is located at residues 1 to 50 (MKKFINQFSASLKNNILVFLAFPFVWTSCARDNPLSSENSNISPNAAARA). Residues 60–326 (IKLFSFTEVN…KLIAKELYGD (267 aa)) enclose the GH18 domain. Glu-182 (proton donor) is an active-site residue. A propeptide (removed in mature form) is located at residue Trp-339.

The protein belongs to the glycosyl hydrolase 18 family. In terms of assembly, monomer.

The protein localises to the secreted. The enzyme catalyses an N(4)-(oligosaccharide-(1-&gt;3)-[oligosaccharide-(1-&gt;6)]-beta-D-Man-(1-&gt;4)-beta-D-GlcNAc-(1-&gt;4)-alpha-D-GlcNAc)-L-asparaginyl-[protein] + H2O = an oligosaccharide-(1-&gt;3)-[oligosaccharide-(1-&gt;6)]-beta-D-Man-(1-&gt;4)-D-GlcNAc + N(4)-(N-acetyl-beta-D-glucosaminyl)-L-asparaginyl-[protein]. In terms of biological role, endohydrolysis of the di-N-acetylchitobiosyl unit in high-mannose glycopeptides and glycoproteins. Does not hydrolyze complex bi- or triantennary glycans. The presence of a core-bound fucose impedes endo F1 hydrolysis. This is Endo-beta-N-acetylglucosaminidase F1 (endOF1) from Elizabethkingia meningoseptica (Chryseobacterium meningosepticum).